Here is a 364-residue protein sequence, read N- to C-terminus: DNA replication and repair protein RecF (364 aa).

ATP is bound at residue 30–37 (GANGSGKT).

It belongs to the RecF family.

Its subcellular location is the cytoplasm. Its function is as follows. The RecF protein is involved in DNA metabolism; it is required for DNA replication and normal SOS inducibility. RecF binds preferentially to single-stranded, linear DNA. It also seems to bind ATP. This Sodalis glossinidius (strain morsitans) protein is DNA replication and repair protein RecF.